A 215-amino-acid chain; its full sequence is Recombination protein RecR (215 aa).

Residues 74–89 (CQRCGHLSADPICDIC) form a C4-type zinc finger. The 95-residue stretch at 97–191 (GVICVVADSR…RVTRIAYGLP (95 aa)) folds into the Toprim domain.

The protein belongs to the RecR family.

Functionally, may play a role in DNA repair. It seems to be involved in an RecBC-independent recombinational process of DNA repair. It may act with RecF and RecO. This chain is Recombination protein RecR, found in Synechococcus sp. (strain RCC307).